The primary structure comprises 897 residues: Transportin-2 (897 aa).

20 HEAT repeats span residues 9–36, 41–79, 88–121, 127–164, 171–201, 214–241, 253–280, 296–386, 394–422, 434–461, 475–508, 516–549, 557–595, 603–654, 665–696, 704–737, 745–790, 798–831, 840–871, and 874–894; these read GLQQ…DKLK, FPDF…AHYQ, FIKQ…KGEL, LLPQ…LDSD, NIMI…QFIM, FIEH…VMLL, HSII…FWLT, VQLI…LANV, HLLP…GAIA, PELI…TLSR, LKPL…EEEA, LSYI…ADSV, EYIQ…TALQ, EPVY…GLGG, IMTL…KACF, AEFM…MQMG, QMVL…YVCP, QQFI…IGVN, IFFC…KDQV, and DNWQ…LAAF. An Importin N-terminal domain is found at 31-99; sequence VQDKLKQLNQ…KQECLNNIGD (69 aa). The interval 325–364 is disordered; that stretch reads AVPDSEQDIKPRFHKSRTVTLPHEAERPDGSEDAEDDDDD. A compositionally biased stretch (acidic residues) spans 355 to 364; the sequence is SEDAEDDDDD. The residue at position 862 (Lys862) is an N6-acetyllysine.

It belongs to the importin beta family. Importin beta-2 subfamily.

The protein resides in the cytoplasm. It localises to the nucleus. Functionally, probably functions in nuclear protein import as nuclear transport receptor. Serves as receptor for nuclear localization signals (NLS) in cargo substrates. Is thought to mediate docking of the importin/substrate complex to the nuclear pore complex (NPC) through binding to nucleoporin and the complex is subsequently translocated through the pore by an energy requiring, Ran-dependent mechanism. At the nucleoplasmic side of the NPC, Ran binds to the importin, the importin/substrate complex dissociates and importin is re-exported from the nucleus to the cytoplasm where GTP hydrolysis releases Ran. The directionality of nuclear import is thought to be conferred by an asymmetric distribution of the GTP- and GDP-bound forms of Ran between the cytoplasm and nucleus. This is Transportin-2 (TNPO2) from Homo sapiens (Human).